The following is a 32-amino-acid chain: Photosystem II reaction center protein T (32 aa).

A helical transmembrane segment spans residues 3 to 23 (ALVYTFLLIGTLVVIFFAIFF).

It belongs to the PsbT family. PSII is composed of 1 copy each of membrane proteins PsbA, PsbB, PsbC, PsbD, PsbE, PsbF, PsbH, PsbI, PsbJ, PsbK, PsbL, PsbM, PsbT, PsbX, PsbY, PsbZ, Psb30/Ycf12, at least 3 peripheral proteins of the oxygen-evolving complex and a large number of cofactors. It forms dimeric complexes.

The protein localises to the plastid. It localises to the chloroplast thylakoid membrane. Found at the monomer-monomer interface of the photosystem II (PS II) dimer, plays a role in assembly and dimerization of PSII. PSII is a light-driven water plastoquinone oxidoreductase, using light energy to abstract electrons from H(2)O, generating a proton gradient subsequently used for ATP formation. The polypeptide is Photosystem II reaction center protein T (Emiliania huxleyi (Coccolithophore)).